The primary structure comprises 349 residues: Isopentenyl-diphosphate delta-isomerase (349 aa).

5–6 lines the substrate pocket; that stretch reads RK. Residues Ser62, 63–65, Ser93, and Asn122 each bind FMN; that span reads AIT. 93-95 provides a ligand contact to substrate; that stretch reads SQR. Position 151 (Gln151) interacts with substrate. Residue Glu152 participates in Mg(2+) binding. FMN contacts are provided by residues Lys183, Thr213, 259 to 261, and 280 to 281; these read GIR and AL.

It belongs to the IPP isomerase type 2 family. In terms of assembly, homooctamer. Dimer of tetramers. Requires FMN as cofactor. NADPH serves as cofactor. It depends on Mg(2+) as a cofactor.

It is found in the cytoplasm. The catalysed reaction is isopentenyl diphosphate = dimethylallyl diphosphate. In terms of biological role, involved in the biosynthesis of isoprenoids. Catalyzes the 1,3-allylic rearrangement of the homoallylic substrate isopentenyl (IPP) to its allylic isomer, dimethylallyl diphosphate (DMAPP). The chain is Isopentenyl-diphosphate delta-isomerase from Methanothermobacter thermautotrophicus (strain ATCC 29096 / DSM 1053 / JCM 10044 / NBRC 100330 / Delta H) (Methanobacterium thermoautotrophicum).